The primary structure comprises 433 residues: Homoserine dehydrogenase (433 aa).

Residues threonine 13 and valine 14 each contribute to the NADPH site. Residues valine 14 and valine 33 each contribute to the NAD(+) site. Valine 14 lines the NADP(+) pocket. NADPH contacts are provided by lysine 45 and lysine 105. NADP(+) is bound by residues lysine 45 and lysine 105. Na(+) is bound by residues glutamate 129, valine 132, glycine 134, and isoleucine 136. Positions 187 and 190 each coordinate NADP(+). L-homoserine is bound by residues glutamate 190 and aspartate 201. The active-site Proton donor is lysine 205. Glycine 302 is an NADPH binding site. Glycine 302 is a binding site for NAD(+). Glycine 302 contributes to the NADP(+) binding site. The region spanning 350–426 (FLRIHVKDEV…VVQEVKSTYR (77 aa)) is the ACT domain.

It belongs to the homoserine dehydrogenase family. In terms of assembly, homotetramer. The cofactor is a metal cation.

Its subcellular location is the cytoplasm. It localises to the secreted. The catalysed reaction is L-homoserine + NADP(+) = L-aspartate 4-semialdehyde + NADPH + H(+). It functions in the pathway amino-acid biosynthesis; L-methionine biosynthesis via de novo pathway; L-homoserine from L-aspartate: step 3/3. Its pathway is amino-acid biosynthesis; L-threonine biosynthesis; L-threonine from L-aspartate: step 3/5. Feedback inhibition by threonine. Activated by sodium ions. Functionally, catalyzes the conversion of L-aspartate-beta-semialdehyde (L-Asa) to L-homoserine (L-Hse), the third step in the biosynthesis of threonine and methionine from aspartate. Utilizes NADPH but not NADH as coenzyme. In Bacillus subtilis (strain 168), this protein is Homoserine dehydrogenase (hom).